Here is a 114-residue protein sequence, read N- to C-terminus: Aspartate 1-decarboxylase (114 aa).

The Schiff-base intermediate with substrate; via pyruvic acid role is filled by Ser-25. Pyruvic acid (Ser) is present on Ser-25. Thr-57 provides a ligand contact to substrate. The Proton donor role is filled by Tyr-58. Gly-71–Ala-73 is a binding site for substrate.

It belongs to the PanD family. As to quaternary structure, heterooctamer of four alpha and four beta subunits. The cofactor is pyruvate. Post-translationally, is synthesized initially as an inactive proenzyme, which is activated by self-cleavage at a specific serine bond to produce a beta-subunit with a hydroxyl group at its C-terminus and an alpha-subunit with a pyruvoyl group at its N-terminus.

The protein localises to the cytoplasm. It catalyses the reaction L-aspartate + H(+) = beta-alanine + CO2. It participates in cofactor biosynthesis; (R)-pantothenate biosynthesis; beta-alanine from L-aspartate: step 1/1. Catalyzes the pyruvoyl-dependent decarboxylation of aspartate to produce beta-alanine. This Haloquadratum walsbyi (strain DSM 16790 / HBSQ001) protein is Aspartate 1-decarboxylase.